A 101-amino-acid polypeptide reads, in one-letter code: uncharacterized protein (101 aa).

Residues 65–79 (QEAAAPAGPQEPAEA) are compositionally biased toward low complexity. The interval 65–101 (QEAAAPAGPQEPAEASGDAGKKEEVEEEEIEIDFGMF) is disordered. Positions 89-101 (VEEEEIEIDFGMF) are enriched in acidic residues.

This is an uncharacterized protein from Encephalitozoon cuniculi (strain GB-M1) (Microsporidian parasite).